Consider the following 220-residue polypeptide: Fructose-6-phosphate aldolase (220 aa).

Lys85 acts as the Schiff-base intermediate with substrate in catalysis.

It belongs to the transaldolase family. Type 3A subfamily. In terms of assembly, homodecamer.

The protein localises to the cytoplasm. The enzyme catalyses beta-D-fructose 6-phosphate = dihydroxyacetone + D-glyceraldehyde 3-phosphate. In terms of biological role, catalyzes the reversible formation of fructose 6-phosphate from dihydroxyacetone and D-glyceraldehyde 3-phosphate via an aldolization reaction. The chain is Fructose-6-phosphate aldolase from Salmonella gallinarum (strain 287/91 / NCTC 13346).